The sequence spans 438 residues: Acid phosphatase type 7 (438 aa).

The first 23 residues, 1 to 23 (MSPFLGGWLFFCMLLPFSPGVQG), serve as a signal peptide directing secretion. Fe cation-binding residues include D141, D170, and Y173. Residue D170 participates in Zn(2+) binding. Position 205 (N205) interacts with Zn(2+). A glycan (N-linked (GlcNAc...) asparagine) is linked at N211. The Zn(2+) site is built by H286 and H333. H335 is a Fe cation binding site. Residues N350 and N404 are each glycosylated (N-linked (GlcNAc...) asparagine).

This sequence belongs to the metallophosphoesterase superfamily. Purple acid phosphatase family. It depends on Fe cation as a cofactor. Requires Zn(2+) as cofactor.

The protein resides in the secreted. It catalyses the reaction a phosphate monoester + H2O = an alcohol + phosphate. This chain is Acid phosphatase type 7, found in Mus musculus (Mouse).